Here is a 380-residue protein sequence, read N- to C-terminus: Ankyrin repeat domain-containing protein 63 (380 aa).

5 ANK repeats span residues 11-40 (AGTRTFLEAMQAGKVHLARFVLDALDRSII), 46-79 (QGRTPLMVAVGLPDPALRARFVRLLLEQGAAVNL), 83-112 (RGRTALSLACERGHLDAVQLLVQFSGDPEA), 116-145 (AGNSPVMWAAACGHGAVLEFLVRSFRRLGL), and 153-182 (AGLTALQLAAARGHGTCVQALTGPWGRAAA). 2 stretches are compositionally biased toward low complexity: residues 181 to 203 (AAAAAARGSNSDSPPGRPAPAAS) and 216 to 226 (RPLLARFARAA). The disordered stretch occupies residues 181–256 (AAAAAARGSN…GSERPELGRS (76 aa)). Serine 193 is modified (phosphoserine). Serine 294 is modified (phosphoserine). Residues 309–368 (PIGLSPHPEGGPGSGRLGLRRRSTAPDIPSLVGEAPGPESGPELEANALSVSVPGPNPWQ) form a disordered region.

The chain is Ankyrin repeat domain-containing protein 63 from Homo sapiens (Human).